Consider the following 236-residue polypeptide: MICOS complex subunit MIC25 (236 aa).

Positions 1–11 (MGSAESREGRR) are enriched in basic and acidic residues. The disordered stretch occupies residues 1 to 22 (MGSAESREGRRASFGMDEEERV). G2 carries N-myristoyl glycine lipidation. A phosphoserine mark is found at S13 and S31. Disordered stretches follow at residues 34-86 (VVNR…VQVD) and 109-132 (EREAAASPRSVTLRRGEGGVDQEK). Positions 48–58 (GLLAPPAAALG) are enriched in low complexity. 2 stretches are compositionally biased toward basic and acidic residues: residues 62–71 (GREKDSKPPR) and 122–132 (RRGEGGVDQEK). The stretch at 127–167 (GVDQEKQRLAQRARELESQEEELRCRDAFYKEQLGRLERQN) forms a coiled coil. A CHCH domain is found at 195 to 236 (EPVCSGLQAQILRCYRDRLQEVLLCADLVRAYQHCVSSAHKG). 2 consecutive short sequence motifs (cx9C motif) follow at residues 198–208 (CSGLQAQILRC) and 219–229 (CADLVRAYQHC). Cystine bridges form between C198/C229 and C208/C219.

This sequence belongs to the MICOS complex subunit Mic19 family. Metazoan Mic25 subfamily. As to quaternary structure, component of the mitochondrial contact site and cristae organizing system (MICOS) complex, composed of at least MICOS10/MIC10, CHCHD3/MIC19, CHCHD6/MIC25, APOOL/MIC27, IMMT/MIC60, APOO/MIC23/MIC26 and MICOS13/MIC13. This complex was also known under the names MINOS or MitOS complex. The MICOS complex associates with mitochondrial outer membrane proteins SAMM50, MTX1 and MTX2 (together described as components of the mitochondrial outer membrane sorting assembly machinery (SAM) complex) and DNAJC11, mitochondrial inner membrane protein TMEM11 and with HSPA9. The MICOS and SAM complexes together with DNAJC11 are part of a large protein complex spanning both membranes termed the mitochondrial intermembrane space bridging (MIB) complex. Interacts with DISC1. Interacts with IMMT/MIC60.

The protein resides in the mitochondrion inner membrane. Its subcellular location is the mitochondrion. In terms of biological role, component of the MICOS complex, a large protein complex of the mitochondrial inner membrane that plays crucial roles in the maintenance of crista junctions, inner membrane architecture, and formation of contact sites to the outer membrane. This Bos taurus (Bovine) protein is MICOS complex subunit MIC25 (CHCHD6).